The chain runs to 384 residues: MMPNWSQLPEELLNLISKNLDNCFDVVHARSICRSWRSAFPFPSSLSTLSYSLPTFAKFPLVSKDLCTLKKIQIFLFRARNPAADIPEYFLGGIDQDQSNDHMELPSPLQCSVKVKFPQSDPFLVNMLDYQIIPLGFQYIMIGWDPESLANGYVGVAFLPVKKNGGDEFVVLLRYRNHLLVLRSSEMRWMKVKKTSIASCKGLVSFRGRFYVTFLNGDIYVFDPYSLEQTLLMPSEPLRSSKYLIPNGSDELFLVEKFNPFPEADVLDLSRFACRVSRLDEEAGQWVEVIDLGDRVLFIGHFGNVCCSAKELPDGCGVSGNSILFTNEPGYVTFAYKYGVHTGRAEDELNIWRFSREIRVMIVNTFPVVALRLERQAENLALDT.

The F-box domain occupies 3–51; sequence PNWSQLPEELLNLISKNLDNCFDVVHARSICRSWRSAFPFPSSLSTLSY. 2 Kelch repeats span residues 87–137 and 259–309; these read PEYF…PLGF and NPFP…CCSA.

This is F-box/kelch-repeat protein At1g64840 from Arabidopsis thaliana (Mouse-ear cress).